We begin with the raw amino-acid sequence, 573 residues long: MTEPIIEFKDFSFKYNSQAEPTLKNINLKINKGEKILLAGPSGSGKSTIGRCLNGLIPNIDQGEVKGKCLVNGKDITSTSLFDFSFTTSTILQDADSQFIGLTVGEDIAFALENDCQPKDKMHQTVNQWANELKIKELLTQSPQSLSGGQKQIVALAGVLVDESPILLFDEPLANLDPASGLKTMAIIDKIQKELNATVIIIEHRVEEVLSQLIDRIILVNEGTIVADQPTNQLLHSNTLEKIGVREPLYLKALTAADVNLSSIKEVDQISTLPVSEKISDKLAAWTKQAKITKKEVDNLPLLKLDHVGHQYSKNQPYPLKDVSTTINQGDFISIVGQNGAGKTTLCRTICGFISNEGKITLKDQNLSDLSIKERAEKIGYVMQDPNQMISQKMIFDEIALGLRLRNVDEETIKQKVDQTLKICGLYPFRHWPISALSFGQKKRVTIAAILVLEPEIIILDEPTAGQDWKTYTEIMSFLKHLNTMGKTIIIITHDMHLMLEYTSRSLAFAKGKLIADTTPIELLTNQALIKEASLKRTSLYDLAKHYNLPDPNKFVQAYINFEQQNWKDEDYE.

2 ABC transporter domains span residues 6-247 (IEFK…GVRE) and 303-536 (LKLD…ASLK). ATP contacts are provided by residues 40–47 (GPSGSGKS) and 337–344 (GQNGAGKT).

Belongs to the ABC transporter superfamily.

It localises to the cell membrane. Functionally, probably part of an ABC transporter complex. Responsible for energy coupling to the transport system. In Lactobacillus johnsonii (strain CNCM I-12250 / La1 / NCC 533), this protein is Putative ABC transporter ATP-binding protein LJ_1704.